A 171-amino-acid polypeptide reads, in one-letter code: Protein-export protein SecB (171 aa).

It belongs to the SecB family. Homotetramer, a dimer of dimers. One homotetramer interacts with 1 SecA dimer.

The protein resides in the cytoplasm. One of the proteins required for the normal export of preproteins out of the cell cytoplasm. It is a molecular chaperone that binds to a subset of precursor proteins, maintaining them in a translocation-competent state. It also specifically binds to its receptor SecA. The sequence is that of Protein-export protein SecB from Jannaschia sp. (strain CCS1).